The chain runs to 327 residues: Alkene monooxygenase system, ferredoxin--NAD(+) reductase component (327 aa).

Residues 1 to 89 enclose the 2Fe-2S ferredoxin-type domain; the sequence is MRLNDGRSFS…DLEINVRAGD (89 aa). [2Fe-2S] cluster-binding residues include cysteine 32, cysteine 37, cysteine 40, and cysteine 73. In terms of domain architecture, FAD-binding FR-type spans 96–194; the sequence is PRRHAARVTV…EGPYGRAYLR (99 aa).

The protein belongs to the bacterial ring-hydroxylating dioxygenase ferredoxin reductase family. In terms of assembly, monomer. The alkene monooxygenase multicomponent enzyme system is composed of an electron transfer component and a monooxygenase component interacting with the effector protein XamoD. The electron transfer component is composed of a ferredoxin reductase (XamoF) and a ferredoxin (XamoC), and the monooxygenase component is formed by a heterohexamer (dimer of heterotrimers) of two alpha subunits (XamoA), two beta subunits (XamoE) and two gamma subunits (XamoB). FAD is required as a cofactor. [2Fe-2S] cluster serves as cofactor.

It is found in the cytoplasm. It catalyses the reaction 2 reduced [2Fe-2S]-[ferredoxin] + NAD(+) + H(+) = 2 oxidized [2Fe-2S]-[ferredoxin] + NADH. Reductase component of the alkene monooxygenase multicomponent enzyme system which catalyzes the O2- and NADH-dependent epoxidation of short chain (C2 to C6) alkenes to their corresponding epoxides. Ferredoxin reductase catalyzes the transfer of electrons from NADH to ferredoxin (XamoC). NADPH is also effective but with a rate approximately 3-fold lower than with NADH. This chain is Alkene monooxygenase system, ferredoxin--NAD(+) reductase component, found in Xanthobacter autotrophicus (strain ATCC BAA-1158 / Py2).